The primary structure comprises 422 residues: 4-hydroxy-3-methylbut-2-en-1-yl diphosphate synthase (flavodoxin) (422 aa).

Positions 316, 319, 362, and 369 each coordinate [4Fe-4S] cluster.

Belongs to the IspG family. Requires [4Fe-4S] cluster as cofactor.

The enzyme catalyses (2E)-4-hydroxy-3-methylbut-2-enyl diphosphate + oxidized [flavodoxin] + H2O + 2 H(+) = 2-C-methyl-D-erythritol 2,4-cyclic diphosphate + reduced [flavodoxin]. It functions in the pathway isoprenoid biosynthesis; isopentenyl diphosphate biosynthesis via DXP pathway; isopentenyl diphosphate from 1-deoxy-D-xylulose 5-phosphate: step 5/6. In terms of biological role, converts 2C-methyl-D-erythritol 2,4-cyclodiphosphate (ME-2,4cPP) into 1-hydroxy-2-methyl-2-(E)-butenyl 4-diphosphate. This chain is 4-hydroxy-3-methylbut-2-en-1-yl diphosphate synthase (flavodoxin), found in Ehrlichia ruminantium (strain Gardel).